Consider the following 597-residue polypeptide: U3 small nucleolar RNA-associated protein 6 homolog (597 aa).

5 HAT repeats span residues 121–153, 156–188, 304–335, 488–520, and 524–557; these read ATKT…WEME, LSSE…MELM, RKEE…FCLE, GGYK…FEKE, and CNMA…EELN.

This sequence belongs to the UTP6 family. In terms of assembly, part of the small subunit (SSU) processome, composed of more than 70 proteins and the RNA chaperone small nucleolar RNA (snoRNA) U3.

It is found in the nucleus. The protein localises to the nucleolus. Functionally, part of the small subunit (SSU) processome, first precursor of the small eukaryotic ribosomal subunit. During the assembly of the SSU processome in the nucleolus, many ribosome biogenesis factors, an RNA chaperone and ribosomal proteins associate with the nascent pre-rRNA and work in concert to generate RNA folding, modifications, rearrangements and cleavage as well as targeted degradation of pre-ribosomal RNA by the RNA exosome. Involved in nucleolar processing of pre-18S ribosomal RNA. The chain is U3 small nucleolar RNA-associated protein 6 homolog from Homo sapiens (Human).